The sequence spans 72 residues: Conorfamide-Tx2 (72 aa).

A signal peptide spans 1–19 (MSGRGFLLLALLLLVTVEA). The propeptide occupies 20-25 (TRVEKK). The interval 32-39 (AWSGPRNR) is positively charged region crucial for activity against MRGPRX1 receptors. Isoleucine 43 carries the isoleucine amide modification. Positions 44-72 (GRRDMQSPLLSERLRFRALGFRQPSSQKQ) are excised as a propeptide.

Belongs to the FARP (FMRFamide related peptide) family. Expressed by the venom duct.

Its subcellular location is the secreted. Functionally, this peptide activates human sensory neuron-specific G-protein coupled receptors MRGPRX1, but not mouse receptors (EC(50)=0.54 uM). Compared with the agonist chloroquine (anti-malaria drug), it is 600-fold more potent. In vivo, induces itch sensation, since intradermal cheek injection into humanized transgenic mouse (mouse MRGPRX1 replaced by human MRGPRX1) induces scratching. In vivo, treatment of zebrafish larvae with high doses (10 uM) induces hypoactivity at the beginning of the experiment during the dark phase and hyperactivity in the strobe phase after one hour, even after the removal of the toxin from the solution. The chain is Conorfamide-Tx2 from Conus textile (Cloth-of-gold cone).